The chain runs to 316 residues: Pantothenate kinase (316 aa).

Position 95–102 (95–102 (GSVAVGKS)) interacts with ATP.

The protein belongs to the prokaryotic pantothenate kinase family.

The protein resides in the cytoplasm. It catalyses the reaction (R)-pantothenate + ATP = (R)-4'-phosphopantothenate + ADP + H(+). It functions in the pathway cofactor biosynthesis; coenzyme A biosynthesis; CoA from (R)-pantothenate: step 1/5. The polypeptide is Pantothenate kinase (Shewanella pealeana (strain ATCC 700345 / ANG-SQ1)).